A 319-amino-acid chain; its full sequence is Dehydrogenase/reductase SDR family member 9 (319 aa).

Residues 1-17 (MLFWLLVLLILCGFLWN) form the signal peptide. NAD(+) contacts are provided by residues 34–58 (ITGC…HVIA) and Asp83. Substrate is bound at residue Ser164. The Proton acceptor role is filled by Tyr176. Residue Lys180 participates in NAD(+) binding.

This sequence belongs to the short-chain dehydrogenases/reductases (SDR) family. As to quaternary structure, homotetramer.

Its subcellular location is the microsome membrane. It localises to the endoplasmic reticulum membrane. It carries out the reaction 3beta-hydroxy-5alpha-pregnane-20-one + NAD(+) = 5alpha-pregnane-3,20-dione + NADH + H(+). The catalysed reaction is 17beta-hydroxy-5alpha-androstan-3-one + NAD(+) = 5alpha-androstan-3,17-dione + NADH + H(+). The enzyme catalyses androsterone + NAD(+) = 5alpha-androstan-3,17-dione + NADH + H(+). It catalyses the reaction 5alpha-androstane-3alpha,17beta-diol + NAD(+) = 17beta-hydroxy-5alpha-androstan-3-one + NADH + H(+). It carries out the reaction all-trans-retinol + NAD(+) = all-trans-retinal + NADH + H(+). The catalysed reaction is 3alpha-hydroxy-5alpha-pregnan-20-one + NAD(+) = 5alpha-pregnane-3,20-dione + NADH + H(+). Functionally, 3-alpha-hydroxysteroid dehydrogenase that converts 3-alpha-tetrahydroprogesterone (allopregnanolone) to dihydroxyprogesterone and 3-alpha-androstanediol to dihydroxyprogesterone. Also plays a role in the biosynthesis of retinoic acid from retinaldehyde. Can utilize both NADH and NADPH. The protein is Dehydrogenase/reductase SDR family member 9 (DHRS9) of Bos taurus (Bovine).